Consider the following 125-residue polypeptide: Large ribosomal subunit protein bL12 (125 aa).

The protein belongs to the bacterial ribosomal protein bL12 family. As to quaternary structure, homodimer. Part of the ribosomal stalk of the 50S ribosomal subunit. Forms a multimeric L10(L12)X complex, where L10 forms an elongated spine to which 2 to 4 L12 dimers bind in a sequential fashion. Binds GTP-bound translation factors.

Functionally, forms part of the ribosomal stalk which helps the ribosome interact with GTP-bound translation factors. Is thus essential for accurate translation. In Thermoanaerobacter pseudethanolicus (strain ATCC 33223 / 39E) (Clostridium thermohydrosulfuricum), this protein is Large ribosomal subunit protein bL12.